A 285-amino-acid polypeptide reads, in one-letter code: Tetraspanin-3 (285 aa).

Residues Met1 to His6 lie on the Cytoplasmic side of the membrane. The helical transmembrane segment at Leu7–Ile27 threads the bilayer. Over Trp28–Gln43 the chain is Extracellular. N-linked (GlcNAc...) asparagine glycosylation is present at Asn34. A helical transmembrane segment spans residues Trp44 to Ala64. At Cys65–Leu71 the chain is on the cytoplasmic side. The chain crosses the membrane as a helical span at residues Met72 to Phe92. Topologically, residues Ala93 to Lys235 are extracellular. An N-linked (GlcNAc...) asparagine glycan is attached at Asn187. The helical transmembrane segment at Val236–Ala256 threads the bilayer. Topologically, residues Ala257–Leu285 are cytoplasmic.

This sequence belongs to the tetraspanin (TM4SF) family.

It is found in the cell membrane. Its function is as follows. May be involved in the regulation of cell differentiation. The sequence is that of Tetraspanin-3 (TET3) from Arabidopsis thaliana (Mouse-ear cress).